A 236-amino-acid polypeptide reads, in one-letter code: 2,3,4,5-tetrahydropyridine-2,6-dicarboxylate N-acetyltransferase (236 aa).

The protein belongs to the transferase hexapeptide repeat family. DapH subfamily.

It carries out the reaction (S)-2,3,4,5-tetrahydrodipicolinate + acetyl-CoA + H2O = L-2-acetamido-6-oxoheptanedioate + CoA. The protein operates within amino-acid biosynthesis; L-lysine biosynthesis via DAP pathway; LL-2,6-diaminopimelate from (S)-tetrahydrodipicolinate (acetylase route): step 1/3. Its function is as follows. Catalyzes the transfer of an acetyl group from acetyl-CoA to tetrahydrodipicolinate. The protein is 2,3,4,5-tetrahydropyridine-2,6-dicarboxylate N-acetyltransferase of Clostridium perfringens (strain SM101 / Type A).